We begin with the raw amino-acid sequence, 256 residues long: 5'-nucleotidase YutF (256 aa).

It belongs to the HAD-like hydrolase superfamily. NagD family. Homodimer. It depends on Mg(2+) as a cofactor.

It localises to the cytoplasm. The enzyme catalyses a ribonucleoside 5'-phosphate + H2O = a ribonucleoside + phosphate. The catalysed reaction is XMP + H2O = xanthosine + phosphate. Catalyzes the hydrolysis of various purine and pyrimidine 5'-nucleotides, showing preference for 5'-nucleoside monophosphates and exhibiting the highest catalytic activity toward 5'-XMP. Also shows a relatively high phosphohydrolase activity toward the nucleotide precursors ribose-5-phosphate (R5P) and 5-phosphoribosyl-1-pyrophosphate (PRPP), and toward the non-natural substrate p-nitrophenyl phosphate (pNPP). In Bacillus subtilis (strain 168), this protein is 5'-nucleotidase YutF (yutF).